The sequence spans 260 residues: Small ribosomal subunit protein uS2 (260 aa).

Belongs to the universal ribosomal protein uS2 family.

The sequence is that of Small ribosomal subunit protein uS2 from Gluconacetobacter diazotrophicus (strain ATCC 49037 / DSM 5601 / CCUG 37298 / CIP 103539 / LMG 7603 / PAl5).